Here is an 89-residue protein sequence, read N- to C-terminus: MTEKLNEIVVRKTKNVEDHVLDVIVLFNQGIDEVILKGIGREISKAVDVYNSLKDRLGDGIQLVNVQTGSEVRDRRRISYILLRLKRVY.

An N6-acetyllysine modification is found at Lys-12.

It belongs to the histone-like Alba family. Acetylated. Acetylation at Lys-12 decreases DNA-binding affinity.

It localises to the cytoplasm. Its subcellular location is the chromosome. Functionally, binds double-stranded DNA tightly but without sequence specificity. Involved in DNA compaction. This Saccharolobus shibatae (strain ATCC 51178 / DSM 5389 / JCM 8931 / NBRC 15437 / B12) (Sulfolobus shibatae) protein is DNA/RNA-binding protein Alba 2.